The chain runs to 230 residues: 5'-methylthioadenosine/S-adenosylhomocysteine nucleosidase (230 aa).

Glu12 functions as the Proton acceptor in the catalytic mechanism. Substrate is bound by residues Gly78, Ile153, and 174-175 (ME). The active-site Proton donor is Asp198.

Belongs to the PNP/UDP phosphorylase family. MtnN subfamily.

The enzyme catalyses S-adenosyl-L-homocysteine + H2O = S-(5-deoxy-D-ribos-5-yl)-L-homocysteine + adenine. It carries out the reaction S-methyl-5'-thioadenosine + H2O = 5-(methylsulfanyl)-D-ribose + adenine. The catalysed reaction is 5'-deoxyadenosine + H2O = 5-deoxy-D-ribose + adenine. Its pathway is amino-acid biosynthesis; L-methionine biosynthesis via salvage pathway; S-methyl-5-thio-alpha-D-ribose 1-phosphate from S-methyl-5'-thioadenosine (hydrolase route): step 1/2. Its function is as follows. Catalyzes the irreversible cleavage of the glycosidic bond in both 5'-methylthioadenosine (MTA) and S-adenosylhomocysteine (SAH/AdoHcy) to adenine and the corresponding thioribose, 5'-methylthioribose and S-ribosylhomocysteine, respectively. Also cleaves 5'-deoxyadenosine, a toxic by-product of radical S-adenosylmethionine (SAM) enzymes, into 5-deoxyribose and adenine. The polypeptide is 5'-methylthioadenosine/S-adenosylhomocysteine nucleosidase (Shewanella loihica (strain ATCC BAA-1088 / PV-4)).